Here is a 1555-residue protein sequence, read N- to C-terminus: Pre-mRNA cleavage complex 2 protein Pcf11 (1555 aa).

Residue serine 2 is modified to N-acetylserine. The CID domain occupies 14–142 (AREDACRDYQ…ALDVRVNSLD (129 aa)). A Phosphoserine; by WNK1 modification is found at serine 120. Residue threonine 121 is modified to Phosphothreonine; by WNK1. The tract at residues 167-186 (NKSPEEPSTPGTVVSSPSIS) is disordered. A phosphoserine mark is found at serine 169 and serine 182. Positions 174–186 (STPGTVVSSPSIS) are enriched in low complexity. A coiled-coil region spans residues 202–239 (QLIRQQLLAKQKQLLELQQKKLELELEQAKAQLAVSLS). Positions 266 to 648 (VKAPHQVPVQ…QQQHRLSVDA (383 aa)) are disordered. A Glycyl lysine isopeptide (Lys-Gly) (interchain with G-Cter in SUMO2) cross-link involves residue lysine 291. Over residues 307–317 (HGKDQSHRKEF) the composition is skewed to basic and acidic residues. Polar residues predominate over residues 320–333 (NTLNQSDTKTSKTI). A Glycyl lysine isopeptide (Lys-Gly) (interchain with G-Cter in SUMO2) cross-link involves residue lysine 328. 3 stretches are compositionally biased toward basic and acidic residues: residues 342-364 (KQEK…DSKS), 380-421 (HTKD…DVKE), and 427-442 (EKKD…EHRL). Lysine 456 participates in a covalent cross-link: Glycyl lysine isopeptide (Lys-Gly) (interchain with G-Cter in SUMO2). Threonine 459 is modified (phosphothreonine). A compositionally biased stretch (basic residues) spans 475 to 486 (STRKRSRSRSPK). Residues serine 489, serine 494, serine 509, and serine 511 each carry the phosphoserine modification. Over residues 494–508 (SPKRRDRRSPKRRQR) the composition is skewed to basic residues. Positions 529-567 (SHMEEFTPPSREDRNAKRSTKQDIRDPRRMKKTEEERPQ) are enriched in basic and acidic residues. Polar residues predominate over residues 568–578 (ETTNQHSTKSG). Residues 599–615 (SGWEENKSLQQVDEHSK) are compositionally biased toward basic and acidic residues. Position 645 is a phosphoserine (serine 645). A Glycyl lysine isopeptide (Lys-Gly) (interchain with G-Cter in SUMO2) cross-link involves residue lysine 654. Serine 705 is subject to Phosphoserine. Disordered stretches follow at residues 707-732 (FNDR…PASR) and 749-781 (RPLF…PRID). The segment covering 716–725 (PRYEDSDKPF) has biased composition (basic and acidic residues). Residue lysine 723 forms a Glycyl lysine isopeptide (Lys-Gly) (interchain with G-Cter in SUMO2) linkage. A phosphoserine mark is found at serine 728 and serine 777. Threonine 785 bears the Phosphothreonine mark. Phosphoserine is present on serine 794. 3 positions are modified to asymmetric dimethylarginine: arginine 805, arginine 820, and arginine 833. At serine 851 the chain carries Phosphoserine. Asymmetric dimethylarginine occurs at positions 929, 942, 955, 981, 994, and 1007. The tract at residues 1056-1081 (HGQPGPRFERTPGQPGPQRFDGPPGQ) is disordered. An asymmetric dimethylarginine mark is found at arginine 1093 and arginine 1104. 2 disordered regions span residues 1127–1147 (VSFN…NAPS) and 1159–1187 (FDSP…RASG). Serine 1161 bears the Phosphoserine mark. Residues 1162–1175 (PQGPNFNGPHGPGN) are compositionally biased toward low complexity. A Glycyl lysine isopeptide (Lys-Gly) (interchain with G-Cter in SUMO2) cross-link involves residue lysine 1278. Positions 1289-1298 (SATTQVSEVT) are enriched in polar residues. The disordered stretch occupies residues 1289-1315 (SATTQVSEVTAQPPPEEEEDQNEDQDV). Residues 1303 to 1315 (PEEEEDQNEDQDV) show a composition bias toward acidic residues. Residues lysine 1419, lysine 1511, and lysine 1524 each participate in a glycyl lysine isopeptide (Lys-Gly) (interchain with G-Cter in SUMO2) cross-link. A disordered region spans residues 1516 to 1555 (EPCDSPKVKEERIDTPPACTEESIATPSEIKTENDTVESV). Residues 1519 to 1529 (DSPKVKEERID) show a composition bias toward basic and acidic residues. The residue at position 1530 (threonine 1530) is a Phosphothreonine. Lysine 1546 is covalently cross-linked (Glycyl lysine isopeptide (Lys-Gly) (interchain with G-Cter in SUMO2)).

In terms of assembly, associates with the phosphorylated CTD domain of POLR2A /RNA polymerase II. Post-translationally, phosphorylation at Ser-120 and/or Thr-121 by WNK1 weakens its association with POLR2A/RNA polymerase II, promoting transcript release from the chromatin template and mRNA export to the cytoplasm.

It localises to the nucleus. Component of pre-mRNA cleavage complex II, which promotes transcription termination by RNA polymerase II. This is Pre-mRNA cleavage complex 2 protein Pcf11 from Homo sapiens (Human).